Consider the following 188-residue polypeptide: Ribosome-recycling factor (188 aa).

Belongs to the RRF family.

It localises to the cytoplasm. Its function is as follows. Responsible for the release of ribosomes from messenger RNA at the termination of protein biosynthesis. May increase the efficiency of translation by recycling ribosomes from one round of translation to another. The protein is Ribosome-recycling factor of Anaeromyxobacter dehalogenans (strain 2CP-C).